The following is a 505-amino-acid chain: MELQFPLFSIFFVTILFFFLFKKSSKTTKNLPPGPRKLPIIGNILELAGEVQHRVLAELSQKHGPIMHLQLAEISAIVVSSSKVAKEVLKTHDLAFSDRAQLQLSKIILKGCKDVVFNDYDDYWRQMRKICTVELLTANKVNSFRAIREDEAWNLVESIKTSLDSPVNLTHKFTSLTNAITCRAAIGERSKYQDELVHLIELMAALGGGFDIADLFPSYKFLHFLSGLRSKLEKVRKRLDDIFYNILKEHEEKRAKTKNSDGRVAGEEDLVDVLLRVQEKGGLQFPISSNNIQGIICDMLTAGTDTASTALDWAMSELVRYPSVLHKAQAEVREAFKGKTKIHEDDVQGLSYLKLVIKETLRLHPPAPLLLPKECREQCVIEGYTIPVRTKLIVNAWAIGRDPEYWVNAESFDPERFSNKSIDYNGTNLNYIPFGAGRRSCPGIAFGIATIELPLALLLYHFNWGMPGGIKPSALDMNEVLGATLKRKTNLLLSATSYTPNEDSS.

The helical transmembrane segment at 1 to 21 (MELQFPLFSIFFVTILFFFLF) threads the bilayer. Cys-441 serves as a coordination point for heme. Residues 442–462 (PGIAFGIATIELPLALLLYHF) traverse the membrane as a helical segment.

This sequence belongs to the cytochrome P450 family. Heme serves as cofactor.

It is found in the membrane. Probable heme-thiolate monooxygenase. The sequence is that of Cytochrome P450 CYP71D313 from Panax ginseng (Korean ginseng).